The following is a 444-amino-acid chain: Na(+)-translocating NADH-quinone reductase subunit A (444 aa).

Belongs to the NqrA family. In terms of assembly, composed of six subunits; NqrA, NqrB, NqrC, NqrD, NqrE and NqrF.

It carries out the reaction a ubiquinone + n Na(+)(in) + NADH + H(+) = a ubiquinol + n Na(+)(out) + NAD(+). Functionally, NQR complex catalyzes the reduction of ubiquinone-1 to ubiquinol by two successive reactions, coupled with the transport of Na(+) ions from the cytoplasm to the periplasm. NqrA to NqrE are probably involved in the second step, the conversion of ubisemiquinone to ubiquinol. This Shewanella amazonensis (strain ATCC BAA-1098 / SB2B) protein is Na(+)-translocating NADH-quinone reductase subunit A.